Here is a 160-residue protein sequence, read N- to C-terminus: Myosin regulatory light chain, smooth muscle (160 aa).

A Blocked amino end (Ser) modification is found at Ser-1. Ser-11 is subject to Phosphoserine. EF-hand domains follow at residues 20–55 (NQIQ…LGTA) and 88–123 (DPEE…MGDN). Residues Asp-33, Asn-35, Asp-37, and Asp-44 each contribute to the Ca(2+) site.

In terms of biological role, in molluscan muscle, calcium regulation is associated with myosin rather than with actin. Muscle myosin contains two types of light chains: the catalytic light chain, essential for ATPase activity, and the regulatory light chain, a calcium-binding protein responsible for Ca(2+) dependent binding and Ca(2+) dependent Mg-ATPase activity. The polypeptide is Myosin regulatory light chain, smooth muscle (Spisula sachalinensis (Sakhalin surf-clam)).